We begin with the raw amino-acid sequence, 233 residues long: Phosphoribosylformylglycinamidine synthase subunit PurQ (233 aa).

The Glutamine amidotransferase type-1 domain occupies 9–233 (RIGIVTFPGS…LSGFLSAFSS (225 aa)). The active-site Nucleophile is Cys-92. Catalysis depends on residues His-201 and Glu-203.

In terms of assembly, part of the FGAM synthase complex composed of 1 PurL, 1 PurQ and 2 PurS subunits.

Its subcellular location is the cytoplasm. It carries out the reaction N(2)-formyl-N(1)-(5-phospho-beta-D-ribosyl)glycinamide + L-glutamine + ATP + H2O = 2-formamido-N(1)-(5-O-phospho-beta-D-ribosyl)acetamidine + L-glutamate + ADP + phosphate + H(+). The catalysed reaction is L-glutamine + H2O = L-glutamate + NH4(+). The protein operates within purine metabolism; IMP biosynthesis via de novo pathway; 5-amino-1-(5-phospho-D-ribosyl)imidazole from N(2)-formyl-N(1)-(5-phospho-D-ribosyl)glycinamide: step 1/2. Part of the phosphoribosylformylglycinamidine synthase complex involved in the purines biosynthetic pathway. Catalyzes the ATP-dependent conversion of formylglycinamide ribonucleotide (FGAR) and glutamine to yield formylglycinamidine ribonucleotide (FGAM) and glutamate. The FGAM synthase complex is composed of three subunits. PurQ produces an ammonia molecule by converting glutamine to glutamate. PurL transfers the ammonia molecule to FGAR to form FGAM in an ATP-dependent manner. PurS interacts with PurQ and PurL and is thought to assist in the transfer of the ammonia molecule from PurQ to PurL. The sequence is that of Phosphoribosylformylglycinamidine synthase subunit PurQ from Frankia casuarinae (strain DSM 45818 / CECT 9043 / HFP020203 / CcI3).